We begin with the raw amino-acid sequence, 274 residues long: GPN-loop GTPase 3 (274 aa).

13 to 18 (GVGKST) serves as a coordination point for GTP. The Gly-Pro-Asn (GPN)-loop; involved in dimer interface motif lies at 70 to 72 (GPN). A GTP-binding site is contributed by 173 to 176 (SKID). The segment at 255–274 (SESQEPKEPVEEIEEEVDFE) is disordered. A compositionally biased stretch (acidic residues) spans 265–274 (EEIEEEVDFE).

Belongs to the GPN-loop GTPase family. Heterodimers with GPN1 or GPN2. Binds to RNA polymerase II (RNAPII).

Small GTPase required for proper nuclear import of RNA polymerase II and III (RNAPII and RNAPIII). May act at an RNAP assembly step prior to nuclear import. The polypeptide is GPN-loop GTPase 3 (Debaryomyces hansenii (strain ATCC 36239 / CBS 767 / BCRC 21394 / JCM 1990 / NBRC 0083 / IGC 2968) (Yeast)).